An 89-amino-acid polypeptide reads, in one-letter code: Small ribosomal subunit protein uS15 (89 aa).

This sequence belongs to the universal ribosomal protein uS15 family. Part of the 30S ribosomal subunit. Forms a bridge to the 50S subunit in the 70S ribosome, contacting the 23S rRNA.

Its function is as follows. One of the primary rRNA binding proteins, it binds directly to 16S rRNA where it helps nucleate assembly of the platform of the 30S subunit by binding and bridging several RNA helices of the 16S rRNA. Forms an intersubunit bridge (bridge B4) with the 23S rRNA of the 50S subunit in the ribosome. The protein is Small ribosomal subunit protein uS15 of Frankia casuarinae (strain DSM 45818 / CECT 9043 / HFP020203 / CcI3).